The primary structure comprises 263 residues: Insulin-like growth factor-binding protein 1 (263 aa).

The signal sequence occupies residues 1-25 (MPEVLAVRAWPLLLSLAVQLGATVG). The IGFBP N-terminal domain maps to 28–109 (QPWRCAPCSA…TRGQGACMTT (82 aa)). 6 disulfide bridges follow: C32/C59, C35/C61, C43/C62, C50/C65, C73/C86, and C80/C106. The interval 102–131 (GQGACMTTPSDEATDTKDTTSPENVSPESS) is disordered. Phosphoserine occurs at positions 122, 127, 130, 148, and 160. A compositionally biased stretch (polar residues) spans 122-131 (SPENVSPESS). Y162 bears the Phosphotyrosine mark. A Thyroglobulin type-1 domain is found at 177–255 (KEPCQRELYK…SVAVRGDPKC (79 aa)). 3 disulfide bridges follow: C180-C210, C221-C232, and C234-C255. A Phosphoserine modification is found at S246. The Cell attachment site motif lies at 250–252 (RGD).

As to quaternary structure, binds equally well IGF1 and IGF2. Interacts with integrin ITGA5:ITGB1. Interacts with VHL; this interaction inhibits HIF1A degradation.

Its subcellular location is the secreted. Functionally, multifunctional protein that plays a critical role in regulating the availability of IGFs such as IGF1 and IGF2 to their receptors and thereby regulates IGF-mediated cellular processes including cell migration, proliferation, differentiation or apoptosis in a cell-type specific manner. Also plays a positive role in cell migration by interacting with integrin ITGA5:ITGB1 through its RGD motif. Mechanistically, binding to integrins leads to activation of focal adhesion kinase/PTK2 and stimulation of the mitogen-activated protein kinase (MAPK) pathway. Regulates cardiomyocyte apoptosis by suppressing HIF-1alpha/HIF1A degradation through ubiquitination. This Bos taurus (Bovine) protein is Insulin-like growth factor-binding protein 1 (IGFBP1).